Here is a 78-residue protein sequence, read N- to C-terminus: Small ribosomal subunit protein bS18 (78 aa).

The protein belongs to the bacterial ribosomal protein bS18 family. As to quaternary structure, part of the 30S ribosomal subunit. Forms a tight heterodimer with protein bS6.

Its function is as follows. Binds as a heterodimer with protein bS6 to the central domain of the 16S rRNA, where it helps stabilize the platform of the 30S subunit. This Frankia casuarinae (strain DSM 45818 / CECT 9043 / HFP020203 / CcI3) protein is Small ribosomal subunit protein bS18.